We begin with the raw amino-acid sequence, 494 residues long: Ketol-acid reductoisomerase (NADP(+)) (494 aa).

The 195-residue stretch at 14-208 (LDQLGRCRFM…GGHRAGCLES (195 aa)) folds into the KARI N-terminal Rossmann domain. Residues 45–48 (CGAQ), Arg68, Arg76, Ser78, and 108–110 (DKQ) each bind NADP(+). Residue His132 is part of the active site. Gly158 is a binding site for NADP(+). 2 KARI C-terminal knotted domains span residues 209-344 (SFVA…NYPD) and 345-487 (SSLE…MTDM). The Mg(2+) site is built by Asp217, Glu221, Glu389, and Glu393. Ser414 provides a ligand contact to substrate.

This sequence belongs to the ketol-acid reductoisomerase family. Mg(2+) serves as cofactor.

It carries out the reaction (2R)-2,3-dihydroxy-3-methylbutanoate + NADP(+) = (2S)-2-acetolactate + NADPH + H(+). The catalysed reaction is (2R,3R)-2,3-dihydroxy-3-methylpentanoate + NADP(+) = (S)-2-ethyl-2-hydroxy-3-oxobutanoate + NADPH + H(+). It functions in the pathway amino-acid biosynthesis; L-isoleucine biosynthesis; L-isoleucine from 2-oxobutanoate: step 2/4. The protein operates within amino-acid biosynthesis; L-valine biosynthesis; L-valine from pyruvate: step 2/4. Its function is as follows. Involved in the biosynthesis of branched-chain amino acids (BCAA). Catalyzes an alkyl-migration followed by a ketol-acid reduction of (S)-2-acetolactate (S2AL) to yield (R)-2,3-dihydroxy-isovalerate. In the isomerase reaction, S2AL is rearranged via a Mg-dependent methyl migration to produce 3-hydroxy-3-methyl-2-ketobutyrate (HMKB). In the reductase reaction, this 2-ketoacid undergoes a metal-dependent reduction by NADPH to yield (R)-2,3-dihydroxy-isovalerate. This Aliivibrio salmonicida (strain LFI1238) (Vibrio salmonicida (strain LFI1238)) protein is Ketol-acid reductoisomerase (NADP(+)).